The primary structure comprises 90 residues: Small ribosomal subunit protein uS15c (90 aa).

It belongs to the universal ribosomal protein uS15 family. As to quaternary structure, part of the 30S ribosomal subunit.

Its subcellular location is the plastid. The protein resides in the chloroplast. This chain is Small ribosomal subunit protein uS15c (rps15), found in Secale cereale (Rye).